We begin with the raw amino-acid sequence, 206 residues long: CASP-like protein 1F1 (206 aa).

Topologically, residues 1-43 (MCFQFSILYTCYLAHFGVFPRKYLVMAGIEAKFQQNPPLGTHK) are cytoplasmic. A helical membrane pass occupies residues 44–64 (LFLGAHICLRILTVTATLTAA). Topologically, residues 65–92 (WMMITSKQTVEVYGIQVEAKYSYSSAFK) are extracellular. A helical transmembrane segment spans residues 93–113 (FFSYANAIACGCSVLTLFPAF). The Cytoplasmic portion of the chain corresponds to 114 to 124 (SLFYRGSTPMK). Residues 125-145 (FFFLFLHDLCMMSLVLAGCAA) form a helical membrane-spanning segment. At 146–177 (ATAIGYVGRYGNNHAGWMAICDQFDEYCNRIR) the chain is on the extracellular side. A helical transmembrane segment spans residues 178-198 (LSLMFSYLAFVFILMLTIMSA). Topologically, residues 199-206 (NKSREIRV) are cytoplasmic.

It belongs to the Casparian strip membrane proteins (CASP) family. As to quaternary structure, homodimer and heterodimers.

The protein localises to the cell membrane. This is CASP-like protein 1F1 from Vitis vinifera (Grape).